A 268-amino-acid polypeptide reads, in one-letter code: Shikimate dehydrogenase (NADP(+)) (268 aa).

Shikimate is bound by residues Ser13–Ser15 and Thr60. The active-site Proton acceptor is the Lys64. Glu76 contributes to the NADP(+) binding site. The shikimate site is built by Asn85 and Asp100. Residues Gly124 to Ala128, Asn148 to Arg153, and Ile209 contribute to the NADP(+) site. Tyr211 contributes to the shikimate binding site. Gly232 provides a ligand contact to NADP(+).

This sequence belongs to the shikimate dehydrogenase family. As to quaternary structure, homodimer.

The enzyme catalyses shikimate + NADP(+) = 3-dehydroshikimate + NADPH + H(+). It participates in metabolic intermediate biosynthesis; chorismate biosynthesis; chorismate from D-erythrose 4-phosphate and phosphoenolpyruvate: step 4/7. Its function is as follows. Involved in the biosynthesis of the chorismate, which leads to the biosynthesis of aromatic amino acids. Catalyzes the reversible NADPH linked reduction of 3-dehydroshikimate (DHSA) to yield shikimate (SA). The chain is Shikimate dehydrogenase (NADP(+)) from Staphylococcus aureus (strain MRSA252).